The sequence spans 216 residues: UPF0323 lipoprotein HPAG1_0235 (216 aa).

Positions Met-1–Gly-27 are cleaved as a signal peptide. The N-palmitoyl cysteine moiety is linked to residue Cys-28. Cys-28 is lipidated: S-diacylglycerol cysteine. Positions Gln-159–Phe-196 are enriched in polar residues. Positions Gln-159 to Ala-216 are disordered. Residues Ser-198 to Ser-209 show a composition bias toward low complexity.

This sequence belongs to the UPF0323 family.

It is found in the cell membrane. The sequence is that of UPF0323 lipoprotein HPAG1_0235 from Helicobacter pylori (strain HPAG1).